Consider the following 333-residue polypeptide: MTITTRHDWTTEEIQTLLELPLMDLLWQAQTVHRDANPGYRVQLASLLSVKTGGCEEDCSYCSQSIHNSSDVSGFEAQMRVEPVLERARAAKEAGADRFCMGWAWREIRDGAQFEAMLEMVRGVRGMGMEACVTAGMLTDDQAGRLAEAGLTAYNHNLDTSPEHYEKIISTRTYEDRLETLQRVRKAGVTLCSGGIIGMGETLRDRASMLQVLASMNPHPESVPVNGLVAVEGTPLEEQQPFEPLELVRMVATARILMPHARVRLSAGREQLSREAQILCLQAGADSIFYGDLLLTTGNPDVEADRRLLADAGVQANWQENASSLAIKAPAST.

Residues 40 to 269 enclose the Radical SAM core domain; it reads YRVQLASLLS…HARVRLSAGR (230 aa). Residues Cys-55, Cys-59, and Cys-62 each contribute to the [4Fe-4S] cluster site. [2Fe-2S] cluster contacts are provided by Cys-100, Cys-132, Cys-192, and Arg-264.

This sequence belongs to the radical SAM superfamily. Biotin synthase family. In terms of assembly, homodimer. Requires [4Fe-4S] cluster as cofactor. It depends on [2Fe-2S] cluster as a cofactor.

The catalysed reaction is (4R,5S)-dethiobiotin + (sulfur carrier)-SH + 2 reduced [2Fe-2S]-[ferredoxin] + 2 S-adenosyl-L-methionine = (sulfur carrier)-H + biotin + 2 5'-deoxyadenosine + 2 L-methionine + 2 oxidized [2Fe-2S]-[ferredoxin]. It participates in cofactor biosynthesis; biotin biosynthesis; biotin from 7,8-diaminononanoate: step 2/2. Its function is as follows. Catalyzes the conversion of dethiobiotin (DTB) to biotin by the insertion of a sulfur atom into dethiobiotin via a radical-based mechanism. This Synechococcus sp. (strain CC9902) protein is Biotin synthase.